A 269-amino-acid chain; its full sequence is Lysyl endopeptidase (269 aa).

3 disulfides stabilise this stretch: Cys-6–Cys-216, Cys-12–Cys-80, and Cys-36–Cys-58. Active-site charge relay system residues include His-57, Asp-113, and Ser-194.

The protein belongs to the peptidase S1 family.

The protein localises to the secreted. The catalysed reaction is Preferential cleavage: Lys-|-Xaa, including Lys-|-Pro.. In terms of biological role, highly specific endopeptidase that hydrolyzes lysyl bonds including the Lys-Pro bond. The sequence is that of Lysyl endopeptidase from Lysobacter enzymogenes.